We begin with the raw amino-acid sequence, 153 residues long: uncharacterized protein (153 aa).

Disordered stretches follow at residues P24–L87 and G101–S153. Residues S27–S37 show a composition bias toward low complexity. A compositionally biased stretch (basic and acidic residues) spans T143–S153.

This is an uncharacterized protein from Dryophytes versicolor (chameleon treefrog).